The chain runs to 347 residues: Dihydroorotase (347 aa).

His-17 and His-19 together coordinate Zn(2+). Residues His-19–Arg-21 and Asn-45 each bind substrate. Residues Lys-102, His-139, and His-177 each contribute to the Zn(2+) site. Lys-102 carries the post-translational modification N6-carboxylysine. His-139 provides a ligand contact to substrate. Residue Leu-222 coordinates substrate. Position 250 (Asp-250) interacts with Zn(2+). Asp-250 is an active-site residue. Residues His-254 and Ala-266 each coordinate substrate.

Belongs to the metallo-dependent hydrolases superfamily. DHOase family. Class II DHOase subfamily. Homodimer. The cofactor is Zn(2+).

The catalysed reaction is (S)-dihydroorotate + H2O = N-carbamoyl-L-aspartate + H(+). It functions in the pathway pyrimidine metabolism; UMP biosynthesis via de novo pathway; (S)-dihydroorotate from bicarbonate: step 3/3. Its function is as follows. Catalyzes the reversible cyclization of carbamoyl aspartate to dihydroorotate. The sequence is that of Dihydroorotase from Acidovorax sp. (strain JS42).